A 415-amino-acid polypeptide reads, in one-letter code: MYSNLQKTDKAVFDAVEKELGRQRTKLELIASENFTSLSVMEAQGSILTNKYAEGYPGKRYYGGCEFVDMVETLAIERAKQIFGAEHANVQPHSGAQANMAAYLALINPGDTVLGLNLSHGGHLTHGHPMNFSGKYFKIVPMNVRKEDEQIDYEEAAKLALEHKPKVIMAGASNYSRIFDWKKLREIADSVDAYLICDVAHYAGLIAAGVYSNPVPYADIVTTTTHKTLRGPRGGLILCKEKHAKAVNSSVFPGQQGGPLMHVIAAKAVCFGEALKPEFKEYQTQVVKNAKELSTQLQKLGYRIVSGGTDCHVLCVDLTSKSMTGKAAEEALDKAGITTNKNTIPYDTQKPFITSGVRLGTPAVTTRGMKEAEMAAIASFIDNVLNNADNEAKLAEISKEVTAFLGKFLLYTELN.

(6S)-5,6,7,8-tetrahydrofolate contacts are provided by residues Leu-118 and 122–124 (GHL). An N6-(pyridoxal phosphate)lysine modification is found at Lys-227.

The protein belongs to the SHMT family. Homodimer. Requires pyridoxal 5'-phosphate as cofactor.

The protein resides in the cytoplasm. The catalysed reaction is (6R)-5,10-methylene-5,6,7,8-tetrahydrofolate + glycine + H2O = (6S)-5,6,7,8-tetrahydrofolate + L-serine. Its pathway is one-carbon metabolism; tetrahydrofolate interconversion. The protein operates within amino-acid biosynthesis; glycine biosynthesis; glycine from L-serine: step 1/1. Catalyzes the reversible interconversion of serine and glycine with tetrahydrofolate (THF) serving as the one-carbon carrier. This reaction serves as the major source of one-carbon groups required for the biosynthesis of purines, thymidylate, methionine, and other important biomolecules. Also exhibits THF-independent aldolase activity toward beta-hydroxyamino acids, producing glycine and aldehydes, via a retro-aldol mechanism. In Elusimicrobium minutum (strain Pei191), this protein is Serine hydroxymethyltransferase.